The primary structure comprises 87 residues: UPF0297 protein Sca_1229 (87 aa).

Belongs to the UPF0297 family.

In Staphylococcus carnosus (strain TM300), this protein is UPF0297 protein Sca_1229.